The primary structure comprises 296 residues: Homoserine kinase (296 aa).

ATP is bound at residue 84–94 (PLARGLGSSSS).

The protein belongs to the GHMP kinase family. Homoserine kinase subfamily.

It localises to the cytoplasm. The enzyme catalyses L-homoserine + ATP = O-phospho-L-homoserine + ADP + H(+). It functions in the pathway amino-acid biosynthesis; L-threonine biosynthesis; L-threonine from L-aspartate: step 4/5. Functionally, catalyzes the ATP-dependent phosphorylation of L-homoserine to L-homoserine phosphate. This Lactococcus lactis subsp. cremoris (Streptococcus cremoris) protein is Homoserine kinase (thrB).